The primary structure comprises 110 residues: UPF0122 protein SGO_1122 (110 aa).

Belongs to the UPF0122 family.

Its function is as follows. Might take part in the signal recognition particle (SRP) pathway. This is inferred from the conservation of its genetic proximity to ftsY/ffh. May be a regulatory protein. The chain is UPF0122 protein SGO_1122 from Streptococcus gordonii (strain Challis / ATCC 35105 / BCRC 15272 / CH1 / DL1 / V288).